The chain runs to 148 residues: D-aminoacyl-tRNA deacylase (148 aa).

The Gly-cisPro motif, important for rejection of L-amino acids signature appears at Gly-136 to Pro-137.

It belongs to the DTD family. Homodimer.

It is found in the cytoplasm. It carries out the reaction glycyl-tRNA(Ala) + H2O = tRNA(Ala) + glycine + H(+). The enzyme catalyses a D-aminoacyl-tRNA + H2O = a tRNA + a D-alpha-amino acid + H(+). Functionally, an aminoacyl-tRNA editing enzyme that deacylates mischarged D-aminoacyl-tRNAs. Also deacylates mischarged glycyl-tRNA(Ala), protecting cells against glycine mischarging by AlaRS. Acts via tRNA-based rather than protein-based catalysis; rejects L-amino acids rather than detecting D-amino acids in the active site. By recycling D-aminoacyl-tRNA to D-amino acids and free tRNA molecules, this enzyme counteracts the toxicity associated with the formation of D-aminoacyl-tRNA entities in vivo and helps enforce protein L-homochirality. The sequence is that of D-aminoacyl-tRNA deacylase from Streptococcus mutans serotype c (strain ATCC 700610 / UA159).